The primary structure comprises 348 residues: Spore development regulator vosA (348 aa).

The Velvet domain occupies 46–244 (ALSPSSCFLS…SDQGVRLRLR (199 aa)). The disordered stretch occupies residues 250-294 (MMSNKRSISGSGDLTSDQSQQQQQQQPLAKKRREDSVESANPSSL). The span at 253–266 (NKRSISGSGDLTSD) shows a compositional bias: polar residues. The Nuclear localization signal motif lies at 274–280 (QQPLAKK).

Belongs to the velvet family. VosA subfamily. In terms of assembly, forms a heterodimeric complex with VEL2; the formation of the VEL2-VOS1 complex is light-dependent.

It localises to the nucleus. In terms of biological role, component of the velB-VosA heterodimeric complex that plays a dual role in activating genes associated with spore maturation and repressing certain development-associated genes. The complex binds DNA through the DNA-binding domain of vosA that recognizes an 11-nucleotide consensus sequence 5'-CTGGCCGCGGC-3' consisting of two motifs in the promoters of key developmental regulatory genes. Regulates spore viability, trehalose accumulation, and tolerance to thermal and oxidative as well as ion stresses. Positively regulates conidial pigmentation and pathogenicity on barley. In Cochliobolus sativus (strain ND90Pr / ATCC 201652) (Common root rot and spot blotch fungus), this protein is Spore development regulator vosA.